A 306-amino-acid polypeptide reads, in one-letter code: Pantothenate kinase (306 aa).

Position 91-98 (91-98) interacts with ATP; sequence GSVAVGKS.

The protein belongs to the prokaryotic pantothenate kinase family.

The protein resides in the cytoplasm. It catalyses the reaction (R)-pantothenate + ATP = (R)-4'-phosphopantothenate + ADP + H(+). It functions in the pathway cofactor biosynthesis; coenzyme A biosynthesis; CoA from (R)-pantothenate: step 1/5. The polypeptide is Pantothenate kinase (Streptococcus pneumoniae (strain 70585)).